The following is a 275-amino-acid chain: Ceramide synthase (275 aa).

A TLC domain is found at 34–261 (ADAVIVSARL…ICRGACRLFR (228 aa)). 4 consecutive transmembrane segments (helical) span residues 130–150 (FLMV…SVVW), 159–179 (LGCM…KILI), 194–214 (ALML…LYWA), and 232–252 (AHVN…FFLI).

Each isoform has a distinct expression pattern. Isoform 1 is highly expressed in brain. Isoform 2 is expressed at low levels, if any, in all analyzed tissues, with slightly higher levels in testis. Isoform 3 is expressed at very high levels in testis and, at lower levels, in white adipose tissue. In epididymal fat, isoform 3 is expressed at higher levels in obese mice compared with lean mice. By contrast, isoform 1 and 2 levels are significantly lower in obese mice compared with lean mice.

It is found in the golgi apparatus membrane. Its subcellular location is the endoplasmic reticulum membrane. The catalysed reaction is sphing-4-enine + octadecanoyl-CoA = N-octadecanoylsphing-4-enine + CoA + H(+). It carries out the reaction eicosanoyl-CoA + sphing-4-enine = N-eicosanoyl-sphing-4-enine + CoA + H(+). It catalyses the reaction sphing-4-enine + hexadecanoyl-CoA = N-hexadecanoylsphing-4-enine + CoA + H(+). Its function is as follows. Involved in ceramide synthesis. In vitro, isoform 3 stimulates the production of C16-, C18- and C20-ceramides, isoform 1 slightly increases the levels of C18- and C20-ceramides, while isoform 2 exhibits only minimal activity. May interfere with adipogenesis by stimulating ceramide synthesis. This chain is Ceramide synthase (Tlcd3b), found in Mus musculus (Mouse).